Reading from the N-terminus, the 357-residue chain is Protein pelota homolog (357 aa).

Belongs to the eukaryotic release factor 1 family. Pelota subfamily. Monomer. A divalent metal cation is required as a cofactor.

It is found in the cytoplasm. Functionally, may function in recognizing stalled ribosomes, interact with stem-loop structures in stalled mRNA molecules, and effect endonucleolytic cleavage of the mRNA. May play a role in the release non-functional ribosomes and degradation of damaged mRNAs. Has endoribonuclease activity. In Thermococcus kodakarensis (strain ATCC BAA-918 / JCM 12380 / KOD1) (Pyrococcus kodakaraensis (strain KOD1)), this protein is Protein pelota homolog.